A 272-amino-acid chain; its full sequence is MTEKQLSCCLDLMRRLPPSQIEDNLAGLLDLVPDLTEDLLSSIDQPLKVAYDAVSKKDYLLCDYNRDADSYRSPWSNKYDPPLSGACYPSSKLRDIEVQANEIFEIYLNLYFEGGVSSVYCWDLDDNFAAVVLMKKTQDQSKKGQPMRGTWDSIHVVEVKLGKKDKAVYKLTSTVMLSIETDNDNTGKVNLAGSLTRQDEKEYTFNEVDTHCVNIGKMVEDMESKLRQTLETIYFGKTKEVVNTLRNATGNSELEKRKNLSNQIGSAIGNRG.

It belongs to the F-actin-capping protein beta subunit family. Component of the F-actin capping complex, composed of a heterodimer of an alpha and a beta subunit.

Its subcellular location is the cytoplasm. The protein localises to the cytoskeleton. F-actin-capping proteins bind in a Ca(2+)-independent manner to the fast growing ends of actin filaments (barbed end) thereby blocking the exchange of subunits at these ends. Unlike other capping proteins (such as gelsolin and severin), these proteins do not sever actin filaments. This is F-actin-capping protein subunit beta (acpA) from Dictyostelium discoideum (Social amoeba).